The sequence spans 588 residues: Adenine deaminase (588 aa).

This sequence belongs to the metallo-dependent hydrolases superfamily. Adenine deaminase family. In terms of assembly, homodimer. It depends on Mn(2+) as a cofactor.

The catalysed reaction is adenine + H2O + H(+) = hypoxanthine + NH4(+). This Escherichia coli O81 (strain ED1a) protein is Adenine deaminase.